The primary structure comprises 511 residues: Bifunctional purine biosynthesis protein PurH (511 aa).

The 145-residue stretch at 1-145 (MKKRALVSVS…KNHKFVSVIV (145 aa)) folds into the MGS-like domain.

The protein belongs to the PurH family.

The enzyme catalyses (6R)-10-formyltetrahydrofolate + 5-amino-1-(5-phospho-beta-D-ribosyl)imidazole-4-carboxamide = 5-formamido-1-(5-phospho-D-ribosyl)imidazole-4-carboxamide + (6S)-5,6,7,8-tetrahydrofolate. It carries out the reaction IMP + H2O = 5-formamido-1-(5-phospho-D-ribosyl)imidazole-4-carboxamide. It participates in purine metabolism; IMP biosynthesis via de novo pathway; 5-formamido-1-(5-phospho-D-ribosyl)imidazole-4-carboxamide from 5-amino-1-(5-phospho-D-ribosyl)imidazole-4-carboxamide (10-formyl THF route): step 1/1. It functions in the pathway purine metabolism; IMP biosynthesis via de novo pathway; IMP from 5-formamido-1-(5-phospho-D-ribosyl)imidazole-4-carboxamide: step 1/1. The chain is Bifunctional purine biosynthesis protein PurH from Bacillus cytotoxicus (strain DSM 22905 / CIP 110041 / 391-98 / NVH 391-98).